A 449-amino-acid polypeptide reads, in one-letter code: Kynurenine 3-monooxygenase (449 aa).

It belongs to the aromatic-ring hydroxylase family. KMO subfamily. It depends on FAD as a cofactor.

It carries out the reaction L-kynurenine + NADPH + O2 + H(+) = 3-hydroxy-L-kynurenine + NADP(+) + H2O. Its pathway is cofactor biosynthesis; NAD(+) biosynthesis; quinolinate from L-kynurenine: step 1/3. Catalyzes the hydroxylation of L-kynurenine (L-Kyn) to form 3-hydroxy-L-kynurenine (L-3OHKyn). Required for synthesis of quinolinic acid. The protein is Kynurenine 3-monooxygenase of Legionella pneumophila (strain Corby).